Here is a 393-residue protein sequence, read N- to C-terminus: Formate-dependent phosphoribosylglycinamide formyltransferase (393 aa).

N(1)-(5-phospho-beta-D-ribosyl)glycinamide-binding positions include 22 to 23 (EL) and Glu-82. Residues Arg-114, Lys-155, 160 to 165 (SSGKGQ), 195 to 198 (EGFV), and Glu-203 each bind ATP. In terms of domain architecture, ATP-grasp spans 119–308 (RLAAEELGLV…EFALHVRAIL (190 aa)). Residues Glu-267 and Glu-279 each coordinate Mg(2+). N(1)-(5-phospho-beta-D-ribosyl)glycinamide-binding positions include Asp-286, Lys-356, and 363–364 (RR).

Belongs to the PurK/PurT family. As to quaternary structure, homodimer.

It carries out the reaction N(1)-(5-phospho-beta-D-ribosyl)glycinamide + formate + ATP = N(2)-formyl-N(1)-(5-phospho-beta-D-ribosyl)glycinamide + ADP + phosphate + H(+). It participates in purine metabolism; IMP biosynthesis via de novo pathway; N(2)-formyl-N(1)-(5-phospho-D-ribosyl)glycinamide from N(1)-(5-phospho-D-ribosyl)glycinamide (formate route): step 1/1. In terms of biological role, involved in the de novo purine biosynthesis. Catalyzes the transfer of formate to 5-phospho-ribosyl-glycinamide (GAR), producing 5-phospho-ribosyl-N-formylglycinamide (FGAR). Formate is provided by PurU via hydrolysis of 10-formyl-tetrahydrofolate. This Solidesulfovibrio magneticus (strain ATCC 700980 / DSM 13731 / RS-1) (Desulfovibrio magneticus) protein is Formate-dependent phosphoribosylglycinamide formyltransferase.